Consider the following 556-residue polypeptide: Cell wall integrity and stress response component 3 (556 aa).

The N-terminal stretch at 1–38 (MERVWFAKLTNKGTIKIGYISFILLSLLCQSLIGLVNA) is a signal peptide. A WSC domain is found at 39–132 (DFNYEGCYSA…SSYMNVYVNA (94 aa)). Over 39-384 (DFNYEGCYSA…QRLSGGAIAG (346 aa)) the chain is Extracellular. A glycan (N-linked (GlcNAc...) asparagine) is linked at Asn-84. Composition is skewed to low complexity over residues 142–169 (SSSKEGSSTSYMPSTTSSLSSAQISSTT) and 184–257 (TTVS…STTS). Disordered regions lie at residues 142-257 (SSSK…STTS) and 269-312 (TLSS…PSTS). Asn-367 and Asn-370 each carry an N-linked (GlcNAc...) asparagine glycan. The helical transmembrane segment at 385 to 405 (IVIGVVFGVIFIILILLFLIW) threads the bilayer. Residues 406–556 (RRRKSHDQLD…LSSTVSHNRA (151 aa)) lie on the Cytoplasmic side of the membrane. Disordered regions lie at residues 425-444 (YSFGDEDANPIGPPPSSGTT) and 534-556 (LQVVNPDNPDNPELSSTVSHNRA). Positions 546 to 556 (ELSSTVSHNRA) are enriched in polar residues.

The protein localises to the membrane. In Saccharomyces cerevisiae (strain ATCC 204508 / S288c) (Baker's yeast), this protein is Cell wall integrity and stress response component 3 (WSC3).